The primary structure comprises 49 residues: Large ribosomal subunit protein bL33 (49 aa).

Belongs to the bacterial ribosomal protein bL33 family.

The protein is Large ribosomal subunit protein bL33 of Lactiplantibacillus plantarum (strain ATCC BAA-793 / NCIMB 8826 / WCFS1) (Lactobacillus plantarum).